The chain runs to 554 residues: Dihydroxy-acid dehydratase (554 aa).

Asp78 provides a ligand contact to Mg(2+). Cys119 contacts [2Fe-2S] cluster. The Mg(2+) site is built by Asp120 and Lys121. At Lys121 the chain carries N6-carboxylysine. Cys191 provides a ligand contact to [2Fe-2S] cluster. Glu442 serves as a coordination point for Mg(2+). Ser468 functions as the Proton acceptor in the catalytic mechanism.

Belongs to the IlvD/Edd family. Homodimer. The cofactor is [2Fe-2S] cluster. It depends on Mg(2+) as a cofactor.

The catalysed reaction is (2R)-2,3-dihydroxy-3-methylbutanoate = 3-methyl-2-oxobutanoate + H2O. It catalyses the reaction (2R,3R)-2,3-dihydroxy-3-methylpentanoate = (S)-3-methyl-2-oxopentanoate + H2O. Its pathway is amino-acid biosynthesis; L-isoleucine biosynthesis; L-isoleucine from 2-oxobutanoate: step 3/4. It participates in amino-acid biosynthesis; L-valine biosynthesis; L-valine from pyruvate: step 3/4. Functionally, functions in the biosynthesis of branched-chain amino acids. Catalyzes the dehydration of (2R,3R)-2,3-dihydroxy-3-methylpentanoate (2,3-dihydroxy-3-methylvalerate) into 2-oxo-3-methylpentanoate (2-oxo-3-methylvalerate) and of (2R)-2,3-dihydroxy-3-methylbutanoate (2,3-dihydroxyisovalerate) into 2-oxo-3-methylbutanoate (2-oxoisovalerate), the penultimate precursor to L-isoleucine and L-valine, respectively. This is Dihydroxy-acid dehydratase from Hydrogenobaculum sp. (strain Y04AAS1).